We begin with the raw amino-acid sequence, 130 residues long: Follitropin subunit beta (130 aa).

The N-terminal stretch at 1–20 is a signal peptide; it reads MMKSIQLCILLWCLRAVCCH. 6 cysteine pairs are disulfide-bonded: C22–C70, C36–C85, C39–C123, C47–C101, C51–C103, and C106–C113. N-linked (GlcNAc...) asparagine glycosylation is found at N26 and N43.

It belongs to the glycoprotein hormones subunit beta family. As to quaternary structure, heterodimer. The active follitropin is a heterodimer composed of an alpha chain/CGA shared with other hormones and a unique beta chain/FSHB shown here.

It localises to the secreted. Together with the alpha chain CGA constitutes follitropin, the follicle-stimulating hormone, and provides its biological specificity to the hormone heterodimer. Binds FSHR, a G protein-coupled receptor, on target cells to activate downstream signaling pathways. Follitropin is involved in follicle development and spermatogenesis in reproductive organs. In Rattus norvegicus (Rat), this protein is Follitropin subunit beta (Fshb).